The following is a 448-amino-acid chain: FAD-linked oxidoreductase nodO (448 aa).

Positions 35 to 206 (PEHFPLAIVK…IRFFLKTCPL (172 aa)) constitute an FAD-binding PCMH-type domain.

It belongs to the oxygen-dependent FAD-linked oxidoreductase family. Requires FAD as cofactor.

Its pathway is secondary metabolite biosynthesis. Functionally, FAD-linked oxidoreductase; part of the gene cluster that mediates the biosynthesis of the indole diterpenes nodulisporic acids (NA). Nodulisporic acid A (NAA) and its chemically modified derivatives are of particular significance because of their highly potent insecticidal activity against blood-feeding arthropods and lack of observable adverse effects on mammals, in particular the tremogenicity associated with the paspaline-derived IDTs is not observed. The geranylgeranyl diphosphate (GGPP) synthase ggs1, localized outside of the cluster, is proposed to catalyze the first step in nodulisporic acid biosynthesis via conversion of farnesyl pyrophosphate and isopentyl pyrophosphate into geranylgeranyl pyrophosphate (GGPP). Condensation of indole-3-glycerol phosphate with GGPP by the prenyl transferase nodC then forms 3-geranylgeranylindole (3-GGI). Epoxidation by the FAD-dependent monooxygenase nodM leads to a single-epoxidized-GGI that is substrate of the terpene cyclase nodB for cyclization to yield emindole SB. The terminal methyl carbon, C28, of emindole SB is then oxidized by the cytochrome P450 monooxygenase nodW to produce nodulisporic acid F (NAF), the pentacyclic core of NAA. NAF is converted to nodulisporic acid E (NAE) via prenylation. This step is probably performed by one of the indole diterpene prenyltransferases nodD1 or nodD2. Several oxidation steps performed by the FAD-linked oxidoreductase nodO and one of the cytochrome P450 monooxygenase nodR, nodX or nodZ further convert NAE to nodulisporic acid D (NAD). NAD is substrate of cytochrome P450 monooxygenase nodJ to produce the precursor of nodulisporic acid C (NAC), converted to NAC by one of the indole diterpene prenyltransferases nodD1 or nodD2. The FAD-dependent monooxygenase nodY2 then oxidizes NAC to nodulisporic acid B (NAB). Finally NAB is converted to NAA by one of the cytochrome P450 monooxygenases nodR, nodX or nodZ. The sequence is that of FAD-linked oxidoreductase nodO from Hypoxylon pulicicidum.